The chain runs to 110 residues: Insulin (110 aa).

The signal sequence occupies residues 1–24 (MALWMRLLPLLALLALWGPDPAAA). 3 disulfide bridges follow: Cys-31-Cys-96, Cys-43-Cys-109, and Cys-95-Cys-100. The propeptide at 57 to 87 (EAEDLQVGQVELGGGPGAGSLQPLALEGSLQ) is c peptide.

The protein belongs to the insulin family. In terms of assembly, heterodimer of a B chain and an A chain linked by two disulfide bonds.

The protein localises to the secreted. Its function is as follows. Insulin decreases blood glucose concentration. It increases cell permeability to monosaccharides, amino acids and fatty acids. It accelerates glycolysis, the pentose phosphate cycle, and glycogen synthesis in liver. The chain is Insulin (INS) from Gorilla gorilla gorilla (Western lowland gorilla).